Consider the following 290-residue polypeptide: 2-dehydro-3-deoxy-phosphogluconate/2-dehydro-3-deoxy-6-phosphogalactonate aldolase (290 aa).

Substrate is bound by residues Thr42–Thr43, Tyr129–Tyr131, and Lys155–Thr157. Residue Lys155 is the Schiff-base intermediate with substrate of the active site.

This sequence belongs to the DapA family. KDPG aldolase subfamily. In terms of assembly, homotetramer; dimer of dimers.

It catalyses the reaction 2-dehydro-3-deoxy-6-phospho-D-gluconate = D-glyceraldehyde 3-phosphate + pyruvate. The enzyme catalyses 2-dehydro-3-deoxy-6-phospho-D-galactonate = D-glyceraldehyde 3-phosphate + pyruvate. It participates in carbohydrate acid metabolism; 2-dehydro-3-deoxy-D-gluconate degradation; D-glyceraldehyde 3-phosphate and pyruvate from 2-dehydro-3-deoxy-D-gluconate: step 2/2. Involved in the degradation of glucose and galactose via the Entner-Doudoroff pathway. Catalyzes the reversible cleavage of 2-keto-3-deoxy-6-phosphogluconate (KDPG) and 2-keto-3-deoxygluconate (KDG) forming pyruvate and glyceraldehyde 3-phosphate or glyceraldehyde, respectively. It is also able to catalyze the reversible cleavage of 2-keto-3-deoxy-6-phosphogalactonate (KDPGal) and 2-keto-3-deoxygalactonate (KDGal). In Sulfurisphaera tokodaii (strain DSM 16993 / JCM 10545 / NBRC 100140 / 7) (Sulfolobus tokodaii), this protein is 2-dehydro-3-deoxy-phosphogluconate/2-dehydro-3-deoxy-6-phosphogalactonate aldolase (kdgA).